We begin with the raw amino-acid sequence, 336 residues long: Ribosomal RNA small subunit methyltransferase C (336 aa).

This sequence belongs to the methyltransferase superfamily. RsmC family. In terms of assembly, monomer.

It is found in the cytoplasm. The enzyme catalyses guanosine(1207) in 16S rRNA + S-adenosyl-L-methionine = N(2)-methylguanosine(1207) in 16S rRNA + S-adenosyl-L-homocysteine + H(+). Specifically methylates the guanine in position 1207 of 16S rRNA in the 30S particle. This Hamiltonella defensa subsp. Acyrthosiphon pisum (strain 5AT) protein is Ribosomal RNA small subunit methyltransferase C.